The following is a 51-amino-acid chain: Insulin (51 aa).

3 cysteine pairs are disulfide-bonded: cysteine 8–cysteine 37, cysteine 20–cysteine 50, and cysteine 36–cysteine 41.

It belongs to the insulin family. Heterodimer of a B chain and an A chain linked by two disulfide bonds.

The protein localises to the secreted. Its function is as follows. Insulin decreases blood glucose concentration. It increases cell permeability to monosaccharides, amino acids and fatty acids. It accelerates glycolysis, the pentose phosphate cycle, and glycogen synthesis in liver. This chain is Insulin, found in Seriola quinqueradiata (Five-ray yellowtail).